Consider the following 342-residue polypeptide: Prenyl transferase ptmC (342 aa).

The helical transmembrane segment at 17–37 (LSFLTLTVGALALIVVLYISI) threads the bilayer. Residue H110 participates in isopentenyl diphosphate binding. The Mg(2+) site is built by D117 and D121. R126 contacts dimethylallyl diphosphate. A glycan (N-linked (GlcNAc...) asparagine) is linked at N154. K210, T211, Q240, N247, and K257 together coordinate dimethylallyl diphosphate.

Belongs to the FPP/GGPP synthase family.

The protein resides in the membrane. It participates in secondary metabolite biosynthesis. Functionally, prenyl transferase; part of the gene cluster that mediates the biosynthesis of the indole diterpenes penitrems. The geranylgeranyl diphosphate (GGPP) synthase ptmG catalyzes the first step in penitrem biosynthesis via conversion of farnesyl pyrophosphate and isopentyl pyrophosphate into geranylgeranyl pyrophosphate (GGPP). Condensation of indole-3-glycerol phosphate with GGPP by the prenyl transferase ptmC then forms 3-geranylgeranylindole (3-GGI). Epoxidation by the FAD-dependent monooxygenase ptmM leads to a epoxidized-GGI that is substrate of the terpene cyclase ptmB for cyclization to yield paspaline. Paspaline is subsequently converted to 13-desoxypaxilline by the cytochrome P450 monooxygenase ptmP, the latter being then converted to paxilline by the cytochrome P450 monooxygenase ptmQ. Paxilline is converted to beta-paxitriol via C-10 ketoreduction by the short-chain dehydrogenase ptmH which can be monoprenylated at the C-20 by the indole diterpene prenyltransferase ptmD. A two-step elimination (acetylation and elimination) process performed by the O-acetyltransferase ptmV and ptmI leads to the production of the prenylated form of penijanthine. The FAD-linked oxidoreductase ptmO then converts the prenylated form of penijanthine into PC-M5 which is in turn transformed into PC-M4 by the aromatic dimethylallyltransferase ptmE. Five sequential oxidative transformations performed by the cytochrome P450 monooxygenases ptmK, ptmU, ptmL, ptmN and ptmJ yield the various penitrem compounds. PtmK, ptmU and ptmM are involved in the formation of the key bicyclic ring of penitrem C via the formation of the intermediates secopenitrem D and penitrem D. PtmL catalyzes the epoxidation of penitrem D and C to yield penitrem B and F, respectively. PtmJ catalyzes the last benzylic hydroxylation to convert penitrem B to prenitrem E and penitrem F to penitrem A. This Penicillium ochrochloron protein is Prenyl transferase ptmC.